The chain runs to 140 residues: Organic hydroperoxide resistance protein-like (140 aa).

Belongs to the OsmC/Ohr family.

The sequence is that of Organic hydroperoxide resistance protein-like from Staphylococcus aureus (strain MSSA476).